A 239-amino-acid chain; its full sequence is MGHKINPKGLRLGYTQDWQSRWFAPKNMPALIIEDKRIRELIEERFKMAAISFVGIERAGAFLRINIHTARPGVVIGKKGADIEQLRKDLEKMTGSKTFVNVVEIKNPETDASLVAQSICMQIEKRAHYGAAMKKAIEKALAGKALGIKIMVSGRLGGAEIARTEWKREGRVPLHTLCAEIDYGTAEAMTISGKIGCKVWIFKKTHFAKSPKEILHELRKHREVTETPSGSAETVTEAK.

A KH type-2 domain is found at 38–106; it reads IRELIEERFK…KTFVNVVEIK (69 aa).

The protein belongs to the universal ribosomal protein uS3 family. As to quaternary structure, part of the 30S ribosomal subunit. Forms a tight complex with proteins S10 and S14.

Functionally, binds the lower part of the 30S subunit head. Binds mRNA in the 70S ribosome, positioning it for translation. The sequence is that of Small ribosomal subunit protein uS3 from Elusimicrobium minutum (strain Pei191).